A 734-amino-acid polypeptide reads, in one-letter code: Cell surface glycoprotein gp138B (734 aa).

Positions 1-20 (MKIILTLSIFLICFLQLGQS) are cleaved as a signal peptide. 16 N-linked (GlcNAc...) asparagine glycosylation sites follow: N58, N89, N124, N198, N224, N392, N420, N435, N482, N498, N523, N596, N605, N614, N621, and N630. Residues 504 to 592 (PFIKSYGFLE…SSNEVTFYYF (89 aa)) enclose the IPT/TIG domain. The tract at residues 678–712 (GETPTPSTTPSTTPSTTPSTTPSSTPTQSPGDDGS) is disordered. Positions 680–712 (TPTPSTTPSTTPSTTPSTTPSSTPTQSPGDDGS) are enriched in low complexity. 4 repeat units span residues 683-686 (PSTT), 687-690 (PSTT), 691-694 (PSTT), and 695-698 (PSTT). Residues 683–698 (PSTTPSTTPSTTPSTT) are 4 X 4 AA tandem repeats of P-S-T-T. The GPI-like-anchor amidated glycine moiety is linked to residue G708. The propeptide at 709–734 (DDGSTSSTLSISFYLITLLLLTQQFI) is removed in mature form.

Post-translationally, the sugar chains may play important roles in cell fusion. In terms of processing, the GPI-like-anchor contains a phosphoceramide group, rather than a phosphatidyl group.

Its subcellular location is the cell membrane. Involved in the sexual cell fusion of D.discoideum. This Dictyostelium discoideum (Social amoeba) protein is Cell surface glycoprotein gp138B (GP138B).